The chain runs to 312 residues: Speedy protein A (312 aa).

Positions 67–199 (RQEMTAFFKL…SHYIWQRERS (133 aa)) are speedy/Ringo box; Required for CDK-binding. Ser-221 is modified (phosphoserine). Residue Thr-223 is modified to Phosphothreonine.

This sequence belongs to the Speedy/Ringo family. Interacts with CDK1. Interacts with CDK2. May interact with CDKN1B/KIP1. Identified in a complex with CDK2 and CDKN1B/KIP1, where it interacts primarily with CDK2.

Its subcellular location is the nucleus. In terms of biological role, regulates the G1/S phase transition of the cell cycle by binding and activating CDK1 and CDK2. Contributes to CDK2 activation without promoting CDK2 phosphorylation, by inducing a conformation change of the CDK2 T-loop that obstructs the substrate-binding cleft prior to kinase activation. Interferes with CDKN1B-mediated inhibition of CDK2. Mediates cell survival during the DNA damage process through activation of CDK2. This Rattus norvegicus (Rat) protein is Speedy protein A.